Consider the following 359-residue polypeptide: Epoxide hydrolase 4 (359 aa).

The chain crosses the membrane as a helical; Signal-anchor for type II membrane protein span at residues 15-35 (ALLYWSLVYGYCGLCASVHLL). An AB hydrolase-1 domain is found at 92 to 337 (PLMLLLHGFP…ILSEGSHWLQ (246 aa)). The active-site Nucleophile is Asp-167. Catalysis depends on Tyr-279, which acts as the Proton donor. The Proton acceptor role is filled by His-334.

Belongs to the AB hydrolase superfamily. Epoxide hydrolase family.

The protein localises to the membrane. The polypeptide is Epoxide hydrolase 4 (Ephx4) (Mus musculus (Mouse)).